Reading from the N-terminus, the 460-residue chain is MLO-like protein 9 (460 aa).

The Extracellular segment spans residues 1 to 21 (MAGGGGGGGGEGPRQLDQTPT). The chain crosses the membrane as a helical span at residues 22–42 (WAVSTVCGVIILISIILELII). The Cytoplasmic segment spans residues 43-67 (HKVGEVFERKKKKALFEALEKIKNE). Residues 68–88 (LMVLGFISLLLTFGQNYIASI) traverse the membrane as a helical segment. Residues 89–158 (CVPSRYGHAM…ISLNALHQVH (70 aa)) lie on the Extracellular side of the membrane. The chain crosses the membrane as a helical span at residues 159-179 (IFIFFLAVFHVIYSAITMMLG). The Cytoplasmic portion of the chain corresponds to 180–289 (RAKIRGWKVW…KVVVGIRPEL (110 aa)). A helical transmembrane segment spans residues 290–310 (WAFVMLFLLFDVHGWYVTAVI). At 311–315 (TMIPP) the chain is on the extracellular side. Residues 316 to 336 (LLTLAIGTKLQAIISYMALEI) traverse the membrane as a helical segment. Topologically, residues 337–366 (QERHAVIQGMPVVNVSDQHFWFEKPDLVLH) are cytoplasmic. The chain crosses the membrane as a helical span at residues 367-387 (MIHFVLFQNAFEITYFFWIWY). The Extracellular segment spans residues 388–398 (EFGLRSCFHHH). A helical membrane pass occupies residues 399-419 (FGLIIIRVCLGVGVQFLCSYI). Topologically, residues 420–460 (TLPLYALVTQMGSTMKRSVFDEQTSKALEQWHKKARKKNEK) are cytoplasmic. Positions 441–460 (EQTSKALEQWHKKARKKNEK) are calmodulin-binding.

It belongs to the MLO family.

The protein resides in the membrane. Its function is as follows. May be involved in modulation of pathogen defense and leaf cell death. Activity seems to be regulated by Ca(2+)-dependent calmodulin binding and seems not to require heterotrimeric G proteins. In Arabidopsis thaliana (Mouse-ear cress), this protein is MLO-like protein 9 (MLO9).